Consider the following 314-residue polypeptide: Putative peptide transport system permease protein BruAb2_1031 (314 aa).

6 helical membrane passes run alanine 12–glycine 32, leucine 101–alanine 121, leucine 135–phenylalanine 155, tryptophan 177–alanine 197, valine 237–isoleucine 257, and methionine 286–isoleucine 306. The region spanning leucine 95–tyrosine 304 is the ABC transmembrane type-1 domain.

Belongs to the binding-protein-dependent transport system permease family. As to quaternary structure, the complex is composed of two ATP-binding proteins (BruAb2_1033 and BruAb2_1034), two transmembrane proteins (BruAb2_1031 and BruAb2_1032) and a solute-binding protein (BruAb2_1030).

The protein localises to the cell inner membrane. Its function is as follows. Probably part of an ABC transporter complex that could be involved in peptide import. Probably responsible for the translocation of the substrate across the membrane. This chain is Putative peptide transport system permease protein BruAb2_1031, found in Brucella abortus biovar 1 (strain 9-941).